A 215-amino-acid polypeptide reads, in one-letter code: Agamous-like MADS-box protein AGL63 (215 aa).

The region spanning 1–61 is the MADS-box domain; sequence MRKGKRVIKK…NRLYDFCSNS (61 aa). The K-box domain maps to 90–178; it reads CSDCVKTKES…GSSWEQLMWQ (89 aa). 2 disordered regions span residues 143 to 172 and 184 to 215; these read ARKS…GSSW and MTCQ…SSPP.

Forms homodimer. Interacts with AGL16. In terms of tissue distribution, expressed in bud pedicels, petals, anthers, style, ovary, seeds and embryos.

The protein localises to the nucleus. Probable transcription factor involved in the regulation of fruit growth. Contributes to integument development. Controls organ size via cell expansion. Involved in the regulation of longitudinal growth of the fruit evenly throughout the radial axis. Functions redundantly with TT16/AGL32 to repress nucellus growth and promote its degeneration. This Arabidopsis thaliana (Mouse-ear cress) protein is Agamous-like MADS-box protein AGL63.